Here is a 303-residue protein sequence, read N- to C-terminus: tRNA pseudouridine synthase B (303 aa).

Residue aspartate 46 is the Nucleophile of the active site.

This sequence belongs to the pseudouridine synthase TruB family. Type 1 subfamily.

The enzyme catalyses uridine(55) in tRNA = pseudouridine(55) in tRNA. Its function is as follows. Responsible for synthesis of pseudouridine from uracil-55 in the psi GC loop of transfer RNAs. The sequence is that of tRNA pseudouridine synthase B from Hydrogenovibrio crunogenus (strain DSM 25203 / XCL-2) (Thiomicrospira crunogena).